The chain runs to 118 residues: Membrane-anchored ubiquitin-fold protein 3 (118 aa).

One can recognise a Ubiquitin-like domain in the interval 7–73; it reads IDIKFRLYDG…LENNKTVGQC (67 aa). Cys113 is lipidated: S-palmitoyl cysteine. Cys115 carries the cysteine methyl ester modification. Cys115 is lipidated: S-geranylgeranyl cysteine. A propeptide spans 116–118 (removed in mature form); the sequence is TIL.

As to expression, ubiquitous, but three fold higher expression in senescing leaves.

The protein localises to the cell membrane. In terms of biological role, may serve as docking site to facilitate the association of other proteins to the plasma membrane. This Arabidopsis thaliana (Mouse-ear cress) protein is Membrane-anchored ubiquitin-fold protein 3 (MUB3).